A 188-amino-acid polypeptide reads, in one-letter code: Large ribosomal subunit protein eL18 (188 aa).

Lys119 participates in a covalent cross-link: Glycyl lysine isopeptide (Lys-Gly) (interchain with G-Cter in SUMO2). Ser130 carries the phosphoserine modification. The segment at 150 to 188 (RHFGKAPRTPHSHTKPYVRSKGRKFERARGRWASRGYKN) is disordered. Basic residues-rich tracts occupy residues 151 to 171 (HFGKAPRTPHSHTKPYVRSKG) and 179 to 188 (GRWASRGYKN). Thr158 carries the post-translational modification Phosphothreonine. Lys164 participates in a covalent cross-link: Glycyl lysine isopeptide (Lys-Gly) (interchain with G-Cter in SUMO2).

It belongs to the eukaryotic ribosomal protein eL18 family. In terms of assembly, component of the large ribosomal subunit.

It is found in the cytoplasm. The protein localises to the cytosol. Its subcellular location is the rough endoplasmic reticulum. Component of the large ribosomal subunit. The ribosome is a large ribonucleoprotein complex responsible for the synthesis of proteins in the cell. The sequence is that of Large ribosomal subunit protein eL18 (RPL18) from Oryctolagus cuniculus (Rabbit).